The following is a 531-amino-acid chain: MNCSPPGSCTDTERQRSGTPATPCATLAPTHPLRQANRLPIRRIKMLTAHTGHLLHPEYLQPLSSTPISPIELDAKKSPLALLAQTCSQIGKPDPPPSSKLNSVTSSEKESGRSSSLKLGESPLEDKSSFKPYAKGGETRKESGSSAGGAADKAGFRVPSGSCQPFPHAPSPSSRVSSPGQHCESKNNESQEKKEPEVNKSSLETSQANPTLTRASISNSSAESSQSGDVAPSSKSDPPSLGSGHVAPISPYKPGHSVFPLPPSGIGYHGSIVGAYAGYPSQYVPGLDHTKSSLVGNQLPGTLGLPGKPPSSSPLTGASPPSFMQGLCRDPYCLSYHNASHLGSSSCSTCVHDPSALKSGYPLVYPSHPLHSVHTTLSSSVTPSLSGHPLYTYGFMLQNDPVPHICNWVSASGPCDKRFATSEELLAHLRTHTALPGADKLLAGYPTGLGSAASCHLHLPPTGPGSPNTLPGSLSLRSPHTFGLSRYHPYGKGHLTAPNGLPVPSLPAGSYYSPYALYGQRLTSASALGYQ.

The span at 1–10 (MNCSPPGSCT) shows a compositional bias: polar residues. 3 disordered regions span residues 1 to 28 (MNCSPPGSCTDTERQRSGTPATPCATLA), 88 to 249 (SQIG…VAPI), and 295 to 318 (VGNQLPGTLGLPGKPPSSSPLTGA). 2 stretches are compositionally biased toward low complexity: residues 19–28 (TPATPCATLA) and 113–122 (RSSSLKLGES). Residues 171 to 180 (SPSSRVSSPG) are compositionally biased toward polar residues. The span at 183 to 198 (CESKNNESQEKKEPEV) shows a compositional bias: basic and acidic residues. A compositionally biased stretch (polar residues) spans 199-215 (NKSSLETSQANPTLTRA). The span at 216-227 (SISNSSAESSQS) shows a compositional bias: low complexity. The C2H2-type zinc finger occupies 404–432 (HICNWVSASGPCDKRFATSEELLAHLRTH).

This sequence belongs to the Elbow/Noc family.

It localises to the nucleus. The protein localises to the cytoplasm. Transcriptional corepressor which does not bind directly to DNA and may regulate transcription through recruitment of histone deacetylases to gene promoters. Regulates cell adhesion, migration and proliferation. Involved in specification of the lateral neural plate border (NPB). May be required for segmental gene expression during hindbrain development. This chain is Zinc finger protein 703-B (znf703-b), found in Xenopus laevis (African clawed frog).